Here is a 148-residue protein sequence, read N- to C-terminus: MKLSVLLALGASSLAAAAPAATACDCGAAVTDRLLFSSSISTFQAARNALNPPCCDWSSDNCSSSPDKPRGYDFIPSCQRHDYGYRNGKRLNRFTEDYRKKVDDNFKADLYNYCSQFSGLESWKGVECRRYADIYYFFVRECGDGDCP.

A signal peptide spans 1–23; sequence MKLSVLLALGASSLAAAAPAATA. An N-linked (GlcNAc...) asparagine glycan is attached at N61. The cysteines at positions 62 and 78 are disulfide-linked. Residue H81 is part of the active site. D82 serves as a coordination point for Ca(2+).

It belongs to the phospholipase A2 family. Ca(2+) is required as a cofactor.

Its subcellular location is the secreted. It catalyses the reaction a 1,2-diacyl-sn-glycero-3-phosphocholine + H2O = a 1-acyl-sn-glycero-3-phosphocholine + a fatty acid + H(+). Its function is as follows. Secretory phospholipase that catalyzes the calcium-dependent hydrolysis of the 2-acyl groups in 3-sn-phosphoglycerides. Increases the ability to utilize host-derived nutrients and lipids, and promotes lipid dropplets accumulation. Plays a role in virulence. The polypeptide is Secretory phospholipase A2 (Arthroderma benhamiae (strain ATCC MYA-4681 / CBS 112371) (Trichophyton mentagrophytes)).